The sequence spans 343 residues: Holliday junction branch migration complex subunit RuvB (343 aa).

A large ATPase domain (RuvB-L) region spans residues 1-181 (MDRIIDSAAT…FGIVQRLEFY (181 aa)). Residues Ile20, Arg21, Gly62, Lys65, Thr66, Thr67, 128 to 130 (EDF), Arg171, Tyr181, and Arg218 each bind ATP. Thr66 provides a ligand contact to Mg(2+). A small ATPAse domain (RuvB-S) region spans residues 182 to 252 (SPEDLARIVR…VAQAAMQMLK (71 aa)). The head domain (RuvB-H) stretch occupies residues 255–343 (QGGFDELDRR…SAFTDPEDLF (89 aa)). Residues Arg291, Arg310, and Arg315 each coordinate DNA.

It belongs to the RuvB family. Homohexamer. Forms an RuvA(8)-RuvB(12)-Holliday junction (HJ) complex. HJ DNA is sandwiched between 2 RuvA tetramers; dsDNA enters through RuvA and exits via RuvB. An RuvB hexamer assembles on each DNA strand where it exits the tetramer. Each RuvB hexamer is contacted by two RuvA subunits (via domain III) on 2 adjacent RuvB subunits; this complex drives branch migration. In the full resolvosome a probable DNA-RuvA(4)-RuvB(12)-RuvC(2) complex forms which resolves the HJ.

Its subcellular location is the cytoplasm. The enzyme catalyses ATP + H2O = ADP + phosphate + H(+). In terms of biological role, the RuvA-RuvB-RuvC complex processes Holliday junction (HJ) DNA during genetic recombination and DNA repair, while the RuvA-RuvB complex plays an important role in the rescue of blocked DNA replication forks via replication fork reversal (RFR). RuvA specifically binds to HJ cruciform DNA, conferring on it an open structure. The RuvB hexamer acts as an ATP-dependent pump, pulling dsDNA into and through the RuvAB complex. RuvB forms 2 homohexamers on either side of HJ DNA bound by 1 or 2 RuvA tetramers; 4 subunits per hexamer contact DNA at a time. Coordinated motions by a converter formed by DNA-disengaged RuvB subunits stimulates ATP hydrolysis and nucleotide exchange. Immobilization of the converter enables RuvB to convert the ATP-contained energy into a lever motion, pulling 2 nucleotides of DNA out of the RuvA tetramer per ATP hydrolyzed, thus driving DNA branch migration. The RuvB motors rotate together with the DNA substrate, which together with the progressing nucleotide cycle form the mechanistic basis for DNA recombination by continuous HJ branch migration. Branch migration allows RuvC to scan DNA until it finds its consensus sequence, where it cleaves and resolves cruciform DNA. The chain is Holliday junction branch migration complex subunit RuvB from Xylella fastidiosa (strain Temecula1 / ATCC 700964).